The sequence spans 47 residues: Sperm protamine P1 (47 aa).

Belongs to the protamine P1 family. Testis.

It is found in the nucleus. It localises to the chromosome. Its function is as follows. Protamines substitute for histones in the chromatin of sperm during the haploid phase of spermatogenesis. They compact sperm DNA into a highly condensed, stable and inactive complex. The polypeptide is Sperm protamine P1 (PRM1) (Myotis daubentonii (Daubenton's bat)).